Here is a 101-residue protein sequence, read N- to C-terminus: Large ribosomal subunit protein uL23 (101 aa).

The protein belongs to the universal ribosomal protein uL23 family. Part of the 50S ribosomal subunit. Contacts protein L29, and trigger factor when it is bound to the ribosome.

Its function is as follows. One of the early assembly proteins it binds 23S rRNA. One of the proteins that surrounds the polypeptide exit tunnel on the outside of the ribosome. Forms the main docking site for trigger factor binding to the ribosome. The chain is Large ribosomal subunit protein uL23 from Kocuria rhizophila (strain ATCC 9341 / DSM 348 / NBRC 103217 / DC2201).